The following is a 183-amino-acid chain: TATA-box-binding protein 1 (183 aa).

2 tandem repeats follow at residues 8–84 (IENV…AKKL) and 99–177 (VQNI…RQQL).

The protein belongs to the TBP family.

Functionally, general factor that plays a role in the activation of archaeal genes transcribed by RNA polymerase. Binds specifically to the TATA box promoter element which lies close to the position of transcription initiation. This chain is TATA-box-binding protein 1, found in Methanosarcina acetivorans (strain ATCC 35395 / DSM 2834 / JCM 12185 / C2A).